A 203-amino-acid polypeptide reads, in one-letter code: Probable proteasome subunit beta type-4 (203 aa).

The protein belongs to the peptidase T1B family. In terms of assembly, the 26S proteasome consists of a 20S proteasome core and two 19S regulatory subunits. The 20S proteasome core is composed of 28 subunits that are arranged in four stacked rings, resulting in a barrel-shaped structure. The two end rings are each formed by seven alpha subunits, and the two central rings are each formed by seven beta subunits. The catalytic chamber with the active sites is on the inside of the barrel.

The protein localises to the cytoplasm. It localises to the nucleus. Non-catalytic component of the proteasome, a multicatalytic proteinase complex which is characterized by its ability to cleave peptides with Arg, Phe, Tyr, Leu, and Glu adjacent to the leaving group at neutral or slightly basic pH. The proteasome has an ATP-dependent proteolytic activity. This Neurospora crassa (strain ATCC 24698 / 74-OR23-1A / CBS 708.71 / DSM 1257 / FGSC 987) protein is Probable proteasome subunit beta type-4 (pcb-4).